The sequence spans 250 residues: DNA repair protein RecO (250 aa).

It belongs to the RecO family.

Functionally, involved in DNA repair and RecF pathway recombination. This is DNA repair protein RecO from Syntrophomonas wolfei subsp. wolfei (strain DSM 2245B / Goettingen).